The primary structure comprises 75 residues: DNA-directed RNA polymerase subunit epsilon (75 aa).

It belongs to the RNA polymerase subunit epsilon family. RNAP is composed of a core of 2 alpha, a beta and a beta' subunit. The core is associated with a delta subunit, and at least one of epsilon or omega. When a sigma factor is associated with the core the holoenzyme is formed, which can initiate transcription.

The enzyme catalyses RNA(n) + a ribonucleoside 5'-triphosphate = RNA(n+1) + diphosphate. In terms of biological role, a non-essential component of RNA polymerase (RNAP). The chain is DNA-directed RNA polymerase subunit epsilon from Lactobacillus johnsonii (strain CNCM I-12250 / La1 / NCC 533).